The chain runs to 335 residues: Epidermal differentiation-specific protein (335 aa).

Beta/gamma crystallin 'Greek key' domains are found at residues 2-42 (NTIT…KIVG), 43-81 (QPWI…RLIT), 87-126 (PQIT…RVQR), and 127-169 (GAWA…YPLR).

This sequence belongs to the beta/gamma-crystallin family. As to expression, epidermis specific.

The protein is Epidermal differentiation-specific protein of Cynops pyrrhogaster (Japanese fire-bellied newt).